The chain runs to 1461 residues: Formin-3 (1461 aa).

Disordered stretches follow at residues M1–N67 and Y431–T457. Residues T12–N28 show a composition bias toward low complexity. Composition is skewed to polar residues over residues E29 to D53 and P438 to T457. One can recognise a GBD/FH3 domain in the interval S92–T508. An interaction with tea4 region spans residues Q137–E515. Positions G540–Q639 form a coiled coil. Residues G683–T811 form a disordered region. Over residues S700–S718 the composition is skewed to low complexity. A compositionally biased stretch (pro residues) spans S731 to A784. A compositionally biased stretch (basic and acidic residues) spans P801–T811. Positions L845–L1257 constitute an FH2 domain. Disordered regions lie at residues A1268–K1337 and E1416–Q1461. 2 stretches are compositionally biased toward basic and acidic residues: residues K1273–D1315 and M1325–K1337. The segment covering T1445–V1454 has biased composition (polar residues).

Belongs to the formin homology family. As to quaternary structure, interacts with rax2, rho3 and tea4. Interacts with tea1 in the presence of tea4.

It is found in the cytoplasm. Its subcellular location is the cell cortex. The protein localises to the cell tip. Involved in controlling polarized cell growth. Required for interphase actin cable formation and microtubule organization. The polypeptide is Formin-3 (for3) (Schizosaccharomyces pombe (strain 972 / ATCC 24843) (Fission yeast)).